We begin with the raw amino-acid sequence, 313 residues long: Ribosomal RNA small subunit methyltransferase H (313 aa).

Residues 35–37 (GGH), Asp-55, Phe-81, Asp-103, and Gln-110 contribute to the S-adenosyl-L-methionine site.

The protein belongs to the methyltransferase superfamily. RsmH family.

The protein resides in the cytoplasm. It catalyses the reaction cytidine(1402) in 16S rRNA + S-adenosyl-L-methionine = N(4)-methylcytidine(1402) in 16S rRNA + S-adenosyl-L-homocysteine + H(+). Specifically methylates the N4 position of cytidine in position 1402 (C1402) of 16S rRNA. This Pseudomonas paraeruginosa (strain DSM 24068 / PA7) (Pseudomonas aeruginosa (strain PA7)) protein is Ribosomal RNA small subunit methyltransferase H.